The primary structure comprises 716 residues: Translation initiation factor IF-2 (716 aa).

The interval Gly-53–Glu-135 is disordered. The span at Val-57–Asn-83 shows a compositional bias: polar residues. Residues Val-93 to Lys-109 are compositionally biased toward low complexity. The 170-residue stretch at Ile-217–Lys-386 folds into the tr-type G domain. The interval Gly-226–Thr-233 is G1. Gly-226–Thr-233 is a GTP binding site. Positions Gly-251–His-255 are G2. The segment at Asp-272–Gly-275 is G3. GTP contacts are provided by residues Asp-272 to His-276 and Asn-326 to Asp-329. Residues Asn-326–Asp-329 form a G4 region. The tract at residues Ser-362 to Leu-364 is G5.

It belongs to the TRAFAC class translation factor GTPase superfamily. Classic translation factor GTPase family. IF-2 subfamily.

It is found in the cytoplasm. One of the essential components for the initiation of protein synthesis. Protects formylmethionyl-tRNA from spontaneous hydrolysis and promotes its binding to the 30S ribosomal subunits. Also involved in the hydrolysis of GTP during the formation of the 70S ribosomal complex. The sequence is that of Translation initiation factor IF-2 from Bacillus velezensis (strain DSM 23117 / BGSC 10A6 / LMG 26770 / FZB42) (Bacillus amyloliquefaciens subsp. plantarum).